A 749-amino-acid chain; its full sequence is MSTTIIGFPRLGEFRELKFTTEKYFRKEISEEELLAAAKDLRAKHWNIVKEKGITEIPSNDFSHYDNFLDAAFLFNVVPASVQNLDLSDLERYFALGRGYQGEKGDVRALPMKKWFNTNYHYIVPKFEKDTQVKLAGHKIFDEFQEAKELGLNTRPVLVGPFTFLQLSDFEEGVKADDFVDSFVAAYQEVFAKLADLGATRIQLDEAALVKDLTAEEKALFLNLYNKLLADKKGLEVLFQTYFGDVRDVYADLVNLPVDAIGLDFVEGKKTLELVKGGFPADKTLYVGIVNGKNIWRNNYEKSLTVLEQIPAENIVLTSSCSLLHVPFTTANEEFEPALLNHFAFAVEKLDEIRDLDAIRNGQGSEALAANKELFATERVGENAELRARIAGLTDADYTRLPAFAEREAIQEEAFKLPALPTTTIGSFPQTKEVRAKRLAYRKGELSQKEYDAFLAETIDEWIKWQEDIDFDVLVHGEFERNDMVEYFGQNLSGYLFSKNGWVQSYGMRGVKPPIIWGDVTRLNPITVKWSSYAQSRTNKPVKGMLTGPVTILNWSFPREDISIKDSTLQIALAIKDEVLDLEAAGVKIIQIDEAALREKLPLRRSDWYEDYLDWAIPAFRLVHSTVAPDTQIHTHMCYSEFTDIIPAIDNMDADVISFEASRSNLEILDELKAKNFQTEVGPGVYDIHSPRVPNEGEIDNTIEAILAKVPSKKVWINPDCGLKTRGIPETKESLIRLVEAAKAAREKL.

5-methyltetrahydropteroyltri-L-glutamate-binding positions include 15–18 (RELK) and Lys114. L-homocysteine contacts are provided by residues 425 to 427 (IGS) and Glu478. L-methionine is bound by residues 425–427 (IGS) and Glu478. Residue Trp555 coordinates 5-methyltetrahydropteroyltri-L-glutamate. Residue Asp593 coordinates L-homocysteine. Asp593 is a binding site for L-methionine. Glu599 serves as a coordination point for 5-methyltetrahydropteroyltri-L-glutamate. Positions 636, 638, and 660 each coordinate Zn(2+). Residue His689 is the Proton donor of the active site. Zn(2+) is bound at residue Cys721.

This sequence belongs to the vitamin-B12 independent methionine synthase family. It depends on Zn(2+) as a cofactor.

The enzyme catalyses 5-methyltetrahydropteroyltri-L-glutamate + L-homocysteine = tetrahydropteroyltri-L-glutamate + L-methionine. It participates in amino-acid biosynthesis; L-methionine biosynthesis via de novo pathway; L-methionine from L-homocysteine (MetE route): step 1/1. Catalyzes the transfer of a methyl group from 5-methyltetrahydrofolate to homocysteine resulting in methionine formation. This Streptococcus pneumoniae serotype 2 (strain D39 / NCTC 7466) protein is 5-methyltetrahydropteroyltriglutamate--homocysteine methyltransferase.